Reading from the N-terminus, the 310-residue chain is Ribosomal RNA small subunit methyltransferase H (310 aa).

Residues 32–34 (GGH), Asp52, Phe79, Asp100, and Gln107 each bind S-adenosyl-L-methionine.

This sequence belongs to the methyltransferase superfamily. RsmH family.

It is found in the cytoplasm. The catalysed reaction is cytidine(1402) in 16S rRNA + S-adenosyl-L-methionine = N(4)-methylcytidine(1402) in 16S rRNA + S-adenosyl-L-homocysteine + H(+). Functionally, specifically methylates the N4 position of cytidine in position 1402 (C1402) of 16S rRNA. In Bacillus cereus (strain B4264), this protein is Ribosomal RNA small subunit methyltransferase H.